Reading from the N-terminus, the 371-residue chain is Loganic acid O-methyltransferase (371 aa).

Y31 is an S-adenosyl-L-homocysteine binding site. Positions 37 and 38 each coordinate loganate. Residues C78, N83, D114, H115, S141, and F142 each contribute to the S-adenosyl-L-homocysteine site. Residues H162 and W163 each contribute to the loganate site. N180 serves as a coordination point for Mg(2+). 2 residues coordinate loganate: A241 and H245. Residues D267, F269, and N270 each coordinate Mg(2+). Residues Q273 and Q316 each contribute to the loganate site.

It belongs to the methyltransferase superfamily. Type-7 methyltransferase family. In terms of assembly, homodimer. The cofactor is Mg(2+). As to expression, expressed in leaves (especially in leaf epidermis), flowers, siliques and stems, and, at low levels, in hairy roots.

It carries out the reaction loganate + S-adenosyl-L-methionine = loganin + S-adenosyl-L-homocysteine. Its pathway is alkaloid biosynthesis. Its activity is regulated as follows. Strongly repressed by loganin and slightly by S-adenosyl-L-homocysteine. Its function is as follows. Component of the seco-iridoid and derivatives monoterpenoid indole alkaloids (MIAs, e.g. vinblastine and ajmalicine) biosynthesis pathway. Catalyzes the methylation of loganic acid (6S,7R) to produce loganin. Weak activity with secologanic acid as substrate. Inactive on deoxyloganic, dehydrologanic, epiloganic and loganetic acid. The sequence is that of Loganic acid O-methyltransferase from Catharanthus roseus (Madagascar periwinkle).